Reading from the N-terminus, the 191-residue chain is Akirin-1 (191 aa).

A disordered region spans residues 17-70 (LLSPGSPKRRRCAPLPGPTPGLRPPDAEPPPLQMQTPPASLQQPAPPGSERRLP). A Phosphoserine modification is found at serine 22. A Nuclear localization signal motif is present at residues 23 to 28 (PKRRRC). Pro residues predominate over residues 31-48 (LPGPTPGLRPPDAEPPPL). Over residues 49 to 59 (QMQTPPASLQQ) the composition is skewed to polar residues. Threonine 71 carries the phosphothreonine modification. The SYVS motif signature appears at 188–191 (SYVS).

It belongs to the akirin family. As to expression, expressed in macrophages and satellite cells.

It is found in the nucleus. In terms of biological role, molecular adapter that acts as a bridge between proteins, and which is involved skeletal muscle development. Functions as a signal transducer for MSTN during skeletal muscle regeneration and myogenesis. May regulate chemotaxis of both macrophages and myoblasts by reorganising actin cytoskeleton, leading to more efficient lamellipodia formation via a PI3 kinase dependent pathway. In contrast to AKIRIN2, not involved in nuclear import of proteasomes. The sequence is that of Akirin-1 from Mus musculus (Mouse).